Reading from the N-terminus, the 212-residue chain is MIIKICGVRARDHALTAVDAGADMLGLVFAPSRRQITVEDAASIAEAARFAARGRGRAITLIGVFVNETVERIRDIASSCGLDGVQLSGDEPVIYADALAPLLVIKAVRFDDSAQERAWLIHDQAHVQLLVDARVPGNYGGAGVVADWERAAELARRRSLMLAGGLTPENVADAITRVRPWGVDVSSGVESNGVKDHGKIRAFIAAARAAAR.

This sequence belongs to the TrpF family.

It catalyses the reaction N-(5-phospho-beta-D-ribosyl)anthranilate = 1-(2-carboxyphenylamino)-1-deoxy-D-ribulose 5-phosphate. It participates in amino-acid biosynthesis; L-tryptophan biosynthesis; L-tryptophan from chorismate: step 3/5. The polypeptide is N-(5'-phosphoribosyl)anthranilate isomerase (Roseiflexus castenholzii (strain DSM 13941 / HLO8)).